Consider the following 379-residue polypeptide: Protein psi1 (379 aa).

One can recognise a J domain in the interval 1–70 (MVADTKLYDC…RKLYDQYGIT (70 aa)). 2 disordered regions span residues 69-95 (ITEGNAAPPPPGAEGGPGAGFGGFPGA) and 176-205 (FGGGGAGPHARRSHPSFGGSRPSQPPAQNE). Over residues 81–95 (AEGGPGAGFGGFPGA) the composition is skewed to gly residues.

In terms of biological role, required for nuclear migration during mitosis. It is required for the normal initiation of translation. This chain is Protein psi1 (psi1), found in Schizosaccharomyces pombe (strain 972 / ATCC 24843) (Fission yeast).